Here is a 516-residue protein sequence, read N- to C-terminus: MSREKYYLTTPIFYPNGKPHIGHAYTVIATDALARFQRLDGKDVFFLTGTDEHGLKMQQTAEKEGITPQALADRNSAIFRSMTEAVGGSNDEYIRTTEPRHYASCQAIWKAMAANGDIYLDRYSGWYSVRQEAYFDESETTLGEDGVRREPLGSPVEWNEEESYFFRLSAYQDKLLALYESQPDFVGPAERRNEVMSFVKSGLKDLSISRTTFKWGVPVPGDDKHVMYVWVDALTNYITAAGYPDTKSDQWRYWPATHIIGKDIVRFHAVYWPAFLMSAGIELPKRVFAHGFLFNRGEKMSKSVGNVVDPFALIEHYGLDQVRYFFLREVPFGQDGSYSHDAIVNRTNADLANGLGNLAQRSLSMIAKNCGGVVPKRGEMTDADSAILDQAVAALTTARKAMAGQGIHLALAAIFDVVAEADRYFAGQAPWALKKTDPERMETVLWTTAELVRRVAVLCQPFIPGSAAKLLDLLAVPADKRDFVHVHADYALVPGTALPAPEGVFPRYVEQPGANA.

Residues 13–23 (FYPNGKPHIGH) carry the 'HIGH' region motif. Residues 299-303 (KMSKS) carry the 'KMSKS' region motif. Residue K302 coordinates ATP.

Belongs to the class-I aminoacyl-tRNA synthetase family. MetG type 2B subfamily. In terms of assembly, monomer.

Its subcellular location is the cytoplasm. It catalyses the reaction tRNA(Met) + L-methionine + ATP = L-methionyl-tRNA(Met) + AMP + diphosphate. In terms of biological role, is required not only for elongation of protein synthesis but also for the initiation of all mRNA translation through initiator tRNA(fMet) aminoacylation. The sequence is that of Methionine--tRNA ligase from Mesorhizobium japonicum (strain LMG 29417 / CECT 9101 / MAFF 303099) (Mesorhizobium loti (strain MAFF 303099)).